We begin with the raw amino-acid sequence, 129 residues long: Small ribosomal subunit protein uS9 (129 aa).

The protein belongs to the universal ribosomal protein uS9 family.

The protein is Small ribosomal subunit protein uS9 of Helicobacter pylori (strain P12).